The chain runs to 88 residues: MRLFLSLPVLVVVLAMVLEGPAPAQAAPEISRTFERIPDKLKEFGNTLEDKAREVLETIKQSDIPAKTRNWFSETYNKVKEQLKTAFS.

Residues 1 to 26 (MRLFLSLPVLVVVLAMVLEGPAPAQA) form the signal peptide.

This sequence belongs to the apolipoprotein C1 family.

The protein localises to the secreted. In terms of biological role, inhibitor of lipoprotein binding to the low density lipoprotein (LDL) receptor, LDL receptor-related protein, and very low density lipoprotein (VLDL) receptor. Associates with high density lipoproteins (HDL) and the triacylglycerol-rich lipoproteins in the plasma and makes up about 10% of the protein of the VLDL and 2% of that of HDL. Appears to interfere directly with fatty acid uptake and is also the major plasma inhibitor of cholesteryl ester transfer protein (CETP). Binds free fatty acids and reduces their intracellular esterification. Modulates the interaction of APOE with beta-migrating VLDL and inhibits binding of beta-VLDL to the LDL receptor-related protein. In Ailurus fulgens (Himalayan red panda), this protein is Apolipoprotein C-I (APOC1).